A 196-amino-acid chain; its full sequence is FMN-dependent NADH:quinone oxidoreductase (196 aa).

Ser10 lines the FMN pocket.

This sequence belongs to the azoreductase type 1 family. As to quaternary structure, homodimer. FMN serves as cofactor.

The enzyme catalyses 2 a quinone + NADH + H(+) = 2 a 1,4-benzosemiquinone + NAD(+). The catalysed reaction is N,N-dimethyl-1,4-phenylenediamine + anthranilate + 2 NAD(+) = 2-(4-dimethylaminophenyl)diazenylbenzoate + 2 NADH + 2 H(+). In terms of biological role, quinone reductase that provides resistance to thiol-specific stress caused by electrophilic quinones. Also exhibits azoreductase activity. Catalyzes the reductive cleavage of the azo bond in aromatic azo compounds to the corresponding amines. The polypeptide is FMN-dependent NADH:quinone oxidoreductase (Cereibacter sphaeroides (strain KD131 / KCTC 12085) (Rhodobacter sphaeroides)).